The following is a 496-amino-acid chain: MGARASILRGGKLDAWERIKLKPGGKKHYMMKHLVWASRELERFALDPGLLETSEGCKQIMKQLQPALQTGTKELISLHNTVATLYCVHEKIDVRDTKEALDKIKEEQNKSQQKTQQAEAADKGKVSQNYPIVQNLQGQMVHQPISARTLNAWVKVVEEKAFSPEVIPMFTALSEGATPQDLNTMLNTVGGHQAAMQMLKDTINEEAAEWDRLHPVHAGPVAPGQMREPRGSDIAGTTSTLQEQITWMTNNPPVPVGDIYKRWIILGLNKIVRMYSPVSILDIKQGPKEPFRDYVDRFFKTLRAEQATQDVKNWMTDTLLVQNANPDCKTILRALGPGASLEEMMTACQGVGGPGHKARVLAEAMSKVNNTNIMMQRSNCKGPKRTIKCFNCGKEGHLARNCRAPRKKGCWKCGKEGHQVKDCTERQANFLGKIWPSHRGRPGNLLQNRTEPTAPPEESFRFGEETTTPSRKQETIDKELPLTSLKSLFGSDPLST.

Gly2 carries the N-myristoyl glycine; by host lipid modification. An interaction with Gp41 region spans residues 7–31 (ILRGGKLDAWERIKLKPGGKKHYMM). An interaction with host CALM1 region spans residues 8-43 (LRGGKLDAWERIKLKPGGKKHYMMKHLVWASRELER). Residues 12–19 (KLDAWERI) form an interaction with host AP3D1 region. The interval 14–33 (DAWERIKLKPGGKKHYMMKH) is interaction with membrane phosphatidylinositol 4,5-bisphosphate and RNA. The short motif at 16–22 (WERIKLK) is the Nuclear export signal element. The Nuclear localization signal signature appears at 26–32 (KKHYMMK). An interaction with membrane phosphatidylinositol 4,5-bisphosphate region spans residues 73–77 (KELIS). The interval 106-126 (EEQNKSQQKTQQAEAADKGKV) is disordered. At Ser146 the chain carries Phosphoserine; by host MAPK1. Residues 187–225 (NTVGGHQAAMQMLKDTINEEAAEWDRLHPVHAGPVAPGQ) are interaction with host PPIA/CYPA and NUP153. The tract at residues 215-223 (PVHAGPVAP) is PPIA/CYPA-binding loop. The tract at residues 275–361 (YSPVSILDIK…GGPGHKARVL (87 aa)) is dimerization/Multimerization of capsid protein p24. The CCHC-type 1 zinc finger occupies 387–404 (IKCFNCGKEGHLARNCRA). The residue at position 406 (Arg406) is an Asymmetric dimethylarginine; in Nucleocapsid protein p7; by host PRMT6. A CCHC-type 2 zinc finger spans residues 408-425 (KGCWKCGKEGHQVKDCTE). Residues 436 to 482 (PSHRGRPGNLLQNRTEPTAPPEESFRFGEETTTPSRKQETIDKELPL) are disordered. Positions 452 to 455 (PTAP) match the PTAP/PSAP motif motif. Residues 471 to 480 (RKQETIDKEL) are compositionally biased toward basic and acidic residues.

The protein belongs to the primate lentivirus group gag polyprotein family. Homotrimer; further assembles as hexamers of trimers. Oligomerization possibly creates a central hole into which the cytoplasmic tail of the gp41 envelope protein may be inserted. Interacts with host TRIM22; this interaction seems to disrupt proper trafficking of Gag polyprotein and may interfere with budding. Interacts with host PDZD8. When ubiquitinated, interacts (via p6-gag domain) with host PACSIN2; this interaction allows PACSIN2 recruitment to viral assembly sites and its subsequent incorporation into virions. Interacts with MOV10. As to quaternary structure, homotrimer; further assembles as hexamers of trimers. Interacts with gp41 (via C-terminus). Interacts with host CALM1; this interaction induces a conformational change in the Matrix protein, triggering exposure of the myristate group. Interacts with host AP3D1; this interaction allows the polyprotein trafficking to multivesicular bodies during virus assembly. Part of the pre-integration complex (PIC) which is composed of viral genome, matrix protein, Vpr and integrase. In terms of assembly, homodimer; the homodimer further multimerizes as homohexamers or homopentamers. Interacts with host NUP98. Interacts with host PPIA/CYPA; this interaction stabilizes the capsid. Interacts with host NUP153. Interacts with host PDZD8; this interaction stabilizes the capsid. Interacts with host TRIM5; this interaction destabilizes the capsid. Interacts with host CPSF6. Interacts with host NONO; the interaction is weak. Interacts with host NUP98. As to quaternary structure, interacts with Vpr; this interaction allows Vpr incorporation into the virion. Interacts with host TSG101. p6-gag interacts with host PDCD6IP/AIP1. In terms of processing, gag-Pol polyprotein: Specific enzymatic cleavages by the viral protease yield mature proteins. Post-translationally, tyrosine phosphorylated presumably in the virion by a host kinase. Phosphorylation is apparently not a major regulator of membrane association. Capsid protein p24 is phosphorylated possibly by host MAPK1; this phosphorylation is necessary for Pin1-mediated virion uncoating. In terms of processing, nucleocapsid protein p7 is methylated by host PRMT6, impairing its function by reducing RNA annealing and the initiation of reverse transcription.

The protein resides in the host cell membrane. It is found in the host endosome. Its subcellular location is the host multivesicular body. It localises to the virion membrane. The protein localises to the host nucleus. The protein resides in the host cytoplasm. It is found in the virion. Its function is as follows. Mediates, with Gag-Pol polyprotein, the essential events in virion assembly, including binding the plasma membrane, making the protein-protein interactions necessary to create spherical particles, recruiting the viral Env proteins, and packaging the genomic RNA via direct interactions with the RNA packaging sequence (Psi). In terms of biological role, targets the polyprotein to the plasma membrane via a multipartite membrane-binding signal, that includes its myristoylated N-terminus. Matrix protein is part of the pre-integration complex. Implicated in the release from host cell mediated by Vpu. Binds to RNA. Forms the conical core that encapsulates the genomic RNA-nucleocapsid complex in the virion. Most core are conical, with only 7% tubular. The core is constituted by capsid protein hexamer subunits. The core is disassembled soon after virion entry. The capsid promotes immune invasion by cloaking viral DNA from CGAS detection. Host restriction factors such as TRIM5-alpha or TRIMCyp bind retroviral capsids and cause premature capsid disassembly, leading to blocks in reverse transcription. Capsid restriction by TRIM5 is one of the factors which restricts HIV-1 to the human species. Host PIN1 apparently facilitates the virion uncoating. On the other hand, interactions with PDZD8 or CYPA stabilize the capsid. Functionally, encapsulates and protects viral dimeric unspliced genomic RNA (gRNA). Binds these RNAs through its zinc fingers. Acts as a nucleic acid chaperone which is involved in rearangement of nucleic acid secondary structure during gRNA retrotranscription. Also facilitates template switch leading to recombination. As part of the polyprotein, participates in gRNA dimerization, packaging, tRNA incorporation and virion assembly. Its function is as follows. Plays a role in budding of the assembled particle by interacting with the host class E VPS proteins TSG101 and PDCD6IP/AIP1. This chain is Gag polyprotein (gag), found in Human immunodeficiency virus type 1 group M subtype C (isolate 92BR025) (HIV-1).